We begin with the raw amino-acid sequence, 532 residues long: BEL1-like homeodomain protein 6 (532 aa).

The segment at 144–160 (SKYLKAAQQLLDEAVNV) is SR/KY domain. The disordered stretch occupies residues 170 to 203 (EGDKNNENPQEPNQSTQDSSTNPPADISQSERQE). The span at 176 to 197 (ENPQEPNQSTQDSSTNPPADIS) shows a compositional bias: polar residues. The segment at 200 to 271 (ERQEMQSKLT…SLRDAISGQI (72 aa)) is BELL domain. The homeobox DNA-binding region spans 314–376 (AWRPQRGLPE…NARVRLWKPM (63 aa)). The tract at residues 385-434 (FTENDSNSSSENTPKMSEIGPVAADDEDRAREFSQDQTKPDHGHGYGEET) is disordered. Basic and acidic residues predominate over residues 412–434 (DRAREFSQDQTKPDHGHGYGEET).

Belongs to the TALE/BELL homeobox family. In terms of assembly, may form heterodimeric complexes with TALE/KNOX proteins. Interacts with OFP2, OFP4, and OFP5.

The protein localises to the nucleus. The protein is BEL1-like homeodomain protein 6 (BLH6) of Arabidopsis thaliana (Mouse-ear cress).